A 275-amino-acid polypeptide reads, in one-letter code: Large ribosomal subunit protein uL2 (275 aa).

Disordered stretches follow at residues 38–59 (TRGS…GGHK) and 223–275 (VAMN…RKRK). Residues 50 to 59 (TVRHRGGGHK) are compositionally biased toward basic residues. Positions 229–244 (DHPHGGGEGRTGEARE) are enriched in basic and acidic residues.

This sequence belongs to the universal ribosomal protein uL2 family. As to quaternary structure, part of the 50S ribosomal subunit. Forms a bridge to the 30S subunit in the 70S ribosome.

One of the primary rRNA binding proteins. Required for association of the 30S and 50S subunits to form the 70S ribosome, for tRNA binding and peptide bond formation. It has been suggested to have peptidyltransferase activity; this is somewhat controversial. Makes several contacts with the 16S rRNA in the 70S ribosome. This is Large ribosomal subunit protein uL2 from Bordetella bronchiseptica (strain ATCC BAA-588 / NCTC 13252 / RB50) (Alcaligenes bronchisepticus).